The sequence spans 351 residues: DNA polymerase IV (351 aa).

The 182-residue stretch at 4 to 185 folds into the UmuC domain; the sequence is IIHIDMDCFY…LPLRKIPGVG (182 aa). Residues Asp-8 and Asp-103 each coordinate Mg(2+). Residue Glu-104 is part of the active site.

It belongs to the DNA polymerase type-Y family. As to quaternary structure, monomer. Requires Mg(2+) as cofactor.

The protein localises to the cytoplasm. The catalysed reaction is DNA(n) + a 2'-deoxyribonucleoside 5'-triphosphate = DNA(n+1) + diphosphate. Its function is as follows. Poorly processive, error-prone DNA polymerase involved in untargeted mutagenesis. Copies undamaged DNA at stalled replication forks, which arise in vivo from mismatched or misaligned primer ends. These misaligned primers can be extended by PolIV. Exhibits no 3'-5' exonuclease (proofreading) activity. May be involved in translesional synthesis, in conjunction with the beta clamp from PolIII. The chain is DNA polymerase IV from Photorhabdus laumondii subsp. laumondii (strain DSM 15139 / CIP 105565 / TT01) (Photorhabdus luminescens subsp. laumondii).